The primary structure comprises 115 residues: Ribosome-binding factor A (115 aa).

This sequence belongs to the RbfA family. In terms of assembly, monomer. Binds 30S ribosomal subunits, but not 50S ribosomal subunits or 70S ribosomes.

It is found in the cytoplasm. Functionally, one of several proteins that assist in the late maturation steps of the functional core of the 30S ribosomal subunit. Associates with free 30S ribosomal subunits (but not with 30S subunits that are part of 70S ribosomes or polysomes). Required for efficient processing of 16S rRNA. May interact with the 5'-terminal helix region of 16S rRNA. The protein is Ribosome-binding factor A of Streptococcus gordonii (strain Challis / ATCC 35105 / BCRC 15272 / CH1 / DL1 / V288).